An 89-amino-acid polypeptide reads, in one-letter code: Cell division topological specificity factor (89 aa).

The protein belongs to the MinE family.

Its function is as follows. Prevents the cell division inhibition by proteins MinC and MinD at internal division sites while permitting inhibition at polar sites. This ensures cell division at the proper site by restricting the formation of a division septum at the midpoint of the long axis of the cell. This Klebsiella pneumoniae (strain 342) protein is Cell division topological specificity factor.